The following is a 343-amino-acid chain: Tetraacyldisaccharide 4'-kinase (343 aa).

ATP is bound at residue 65 to 72 (HAGGTGKT).

The protein belongs to the LpxK family.

The catalysed reaction is a lipid A disaccharide + ATP = a lipid IVA + ADP + H(+). Its pathway is glycolipid biosynthesis; lipid IV(A) biosynthesis; lipid IV(A) from (3R)-3-hydroxytetradecanoyl-[acyl-carrier-protein] and UDP-N-acetyl-alpha-D-glucosamine: step 6/6. Its function is as follows. Transfers the gamma-phosphate of ATP to the 4'-position of a tetraacyldisaccharide 1-phosphate intermediate (termed DS-1-P) to form tetraacyldisaccharide 1,4'-bis-phosphate (lipid IVA). The chain is Tetraacyldisaccharide 4'-kinase from Neisseria gonorrhoeae (strain ATCC 700825 / FA 1090).